A 122-amino-acid polypeptide reads, in one-letter code: Large ribosomal subunit protein uL14 (122 aa).

It belongs to the universal ribosomal protein uL14 family. Part of the 50S ribosomal subunit. Forms a cluster with proteins L3 and L19. In the 70S ribosome, L14 and L19 interact and together make contacts with the 16S rRNA in bridges B5 and B8.

Functionally, binds to 23S rRNA. Forms part of two intersubunit bridges in the 70S ribosome. The protein is Large ribosomal subunit protein uL14 of Methylobacillus flagellatus (strain ATCC 51484 / DSM 6875 / VKM B-1610 / KT).